The sequence spans 64 residues: Large ribosomal subunit protein uL29 (64 aa).

This sequence belongs to the universal ribosomal protein uL29 family.

The polypeptide is Large ribosomal subunit protein uL29 (Coprothermobacter proteolyticus (strain ATCC 35245 / DSM 5265 / OCM 4 / BT)).